Here is a 239-residue protein sequence, read N- to C-terminus: Derlin-2 (239 aa).

Topologically, residues 1–56 (MAYQSLRLEYLQIPPVSRAYTTACVLTTAAVQLELITPFQLYFNPELIFKHFQIWR) are cytoplasmic. A helical membrane pass occupies residues 57-77 (LITNFLFFGPVGFNFLFNMIF). The Lumenal segment spans residues 78 to 98 (LYRYCRMLEEGSFRGRTADFV). Residues 99–119 (FMFLFGGFLMTLFGLFVSLVF) traverse the membrane as a helical segment. Residues 120-150 (LGQAFTIMLVYVWSRRNPYVRMNFFGLLNFQ) are Cytoplasmic-facing. A helical transmembrane segment spans residues 151–171 (APFLPWVLMGFSLLLGNSIIV). Residue D172 is a topological domain, lumenal. A helical membrane pass occupies residues 173 to 193 (LLGIAVGHIYFFLEDVFPNQP). Residues 194–239 (GGIRILKTPSILKAIFDTPDEDPNYNPLPEERPGGFAWGEGQRLGG) are Cytoplasmic-facing. The segment at 215–239 (DPNYNPLPEERPGGFAWGEGQRLGG) is disordered. Over residues 229–239 (FAWGEGQRLGG) the composition is skewed to gly residues.

It belongs to the derlin family. As to quaternary structure, forms homo- and heterooligomers with DERL3 and, to a lesser extent, with DERL1. Interacts with the SEL1L/SYVN1 and VCP/SELENOS protein complexes. Mediates association between VCP and EDEM1, as well as that between VCP and the misfolded glycoproteins. Interacts with OS9. Interacts with SELENOK and SELENOS. Interacts with the signal recognition particle/SRP and the SRP receptor; in the process of endoplasmic reticulum stress-induced pre-emptive quality control. Interacts with CCDC47.

It is found in the endoplasmic reticulum membrane. Its function is as follows. Functional component of endoplasmic reticulum-associated degradation (ERAD) for misfolded lumenal glycoproteins, but not that of misfolded nonglycoproteins. May act by forming a channel that allows the retrotranslocation of misfolded glycoproteins into the cytosol where they are ubiquitinated and degraded by the proteasome. May mediate the interaction between VCP and misfolded glycoproteins. May also be involved in endoplasmic reticulum stress-induced pre-emptive quality control, a mechanism that selectively attenuates the translocation of newly synthesized proteins into the endoplasmic reticulum and reroutes them to the cytosol for proteasomal degradation. In Pongo abelii (Sumatran orangutan), this protein is Derlin-2.